The following is a 528-amino-acid chain: Ivanolysin (528 aa).

The N-terminal stretch at 1–23 (MKKIMLLLMTLLLVSLPLAQEAQ) is a signal peptide. 4 beta stranded membrane-spanning segments follow: residues 213–226 (ESQLVAKFGAAFKA), 233–242 (VNFGAISEGK), 311–320 (STRVKAAFDT), and 328–340 (KGDTELENIIQNA). The Conserved undecapeptide motif lies at 482–492 (ECTGLAWEWWR). The Cholesterol binding signature appears at 514–515 (TL).

The protein belongs to the cholesterol-dependent cytolysin family. In terms of assembly, homooligomeric pore complex of 35 to 50 subunits; when inserted in the host membrane.

The protein localises to the secreted. Its subcellular location is the host membrane. Functionally, a cholesterol-dependent toxin that causes cytolysis by forming pores in cholesterol containing host membranes. After binding to target membranes, the protein undergoes a major conformation change, leading to its insertion in the host membrane and formation of an oligomeric pore complex. Cholesterol is required for binding to host membranes, membrane insertion and pore formation; cholesterol binding is mediated by a Thr-Leu pair in the C-terminus. Can be reversibly inactivated by oxidation. The protein is Ivanolysin (ilo) of Listeria ivanovii.